The chain runs to 632 residues: Putative ankyrin repeat protein L767 (632 aa).

5 ANK repeats span residues 61-97 (YGNT…DYEF), 228-250 (FDNE…YIVE), 251-282 (KGFY…NLTD), 345-374 (NLDI…NVDD), and 517-546 (NSIE…NDTD).

The sequence is that of Putative ankyrin repeat protein L767 from Acanthamoeba polyphaga mimivirus (APMV).